The following is a 258-amino-acid chain: Flap endonuclease Xni (258 aa).

Mg(2+) is bound at residue D109. The 5'-3' exonuclease domain maps to 165-254 (VKPEQLPDYW…GFNLQDIRYL (90 aa)). K(+)-binding residues include L176, A177, P185, I187, and I190. Residues 189 to 194 (GIGPKA) form an interaction with DNA region.

Belongs to the Xni family. It depends on Mg(2+) as a cofactor. K(+) serves as cofactor.

Its function is as follows. Has flap endonuclease activity. During DNA replication, flap endonucleases cleave the 5'-overhanging flap structure that is generated by displacement synthesis when DNA polymerase encounters the 5'-end of a downstream Okazaki fragment. This Photobacterium profundum (strain SS9) protein is Flap endonuclease Xni.